Reading from the N-terminus, the 78-residue chain is Translation initiation factor IF-1 (78 aa).

The S1-like domain occupies 4–78 (KFNNQAKQDK…LKLGRIIGRK (75 aa)).

Belongs to the IF-1 family. As to quaternary structure, component of the 30S ribosomal translation pre-initiation complex which assembles on the 30S ribosome in the order IF-2 and IF-3, IF-1 and N-formylmethionyl-tRNA(fMet); mRNA recruitment can occur at any time during PIC assembly.

Its subcellular location is the cytoplasm. One of the essential components for the initiation of protein synthesis. Stabilizes the binding of IF-2 and IF-3 on the 30S subunit to which N-formylmethionyl-tRNA(fMet) subsequently binds. Helps modulate mRNA selection, yielding the 30S pre-initiation complex (PIC). Upon addition of the 50S ribosomal subunit IF-1, IF-2 and IF-3 are released leaving the mature 70S translation initiation complex. The polypeptide is Translation initiation factor IF-1 (Mycoplasma pneumoniae (strain ATCC 29342 / M129 / Subtype 1) (Mycoplasmoides pneumoniae)).